We begin with the raw amino-acid sequence, 117 residues long: Protein OPG035 (117 aa).

This sequence belongs to the poxviridae OPG035 family.

Its function is as follows. Bcl-2-like protein which contributes to virulence by preventing host NF-kappa-B activation in response to pro-inflammatory stimuli such as TNF-alpha or IL1B. The sequence is that of Protein OPG035 (OPG035) from Homo sapiens (Human).